A 469-amino-acid polypeptide reads, in one-letter code: 3-isopropylmalate dehydratase large subunit (469 aa).

Positions 347, 408, and 411 each coordinate [4Fe-4S] cluster.

The protein belongs to the aconitase/IPM isomerase family. LeuC type 1 subfamily. As to quaternary structure, heterodimer of LeuC and LeuD. [4Fe-4S] cluster serves as cofactor.

It catalyses the reaction (2R,3S)-3-isopropylmalate = (2S)-2-isopropylmalate. It participates in amino-acid biosynthesis; L-leucine biosynthesis; L-leucine from 3-methyl-2-oxobutanoate: step 2/4. Its function is as follows. Catalyzes the isomerization between 2-isopropylmalate and 3-isopropylmalate, via the formation of 2-isopropylmaleate. This chain is 3-isopropylmalate dehydratase large subunit, found in Haemophilus influenzae (strain PittEE).